The following is a 164-amino-acid chain: Transcriptional repressor NrdR (164 aa).

The segment at 3-34 is a zinc-finger region; the sequence is CPFCRHEDSRVVDSRSLDDGSAIRRRRQCQAC. Positions 46 to 136 constitute an ATP-cone domain; it reads LTVVKRSGVA…VYRDFESLDD (91 aa).

The protein belongs to the NrdR family. Zn(2+) serves as cofactor.

Negatively regulates transcription of bacterial ribonucleotide reductase nrd genes and operons by binding to NrdR-boxes. This chain is Transcriptional repressor NrdR, found in Micrococcus luteus (strain ATCC 4698 / DSM 20030 / JCM 1464 / CCM 169 / CCUG 5858 / IAM 1056 / NBRC 3333 / NCIMB 9278 / NCTC 2665 / VKM Ac-2230) (Micrococcus lysodeikticus).